Here is a 297-residue protein sequence, read N- to C-terminus: MASEREQISRKVALIALIANLILMAGKVFFGLVGDSEAVFADGIHSAADVVASIAVLAVIGISNKPPDQDHPFGHGKAEVISEAIVGIILVIVSVYILIEAILSFVKGPSVPQYSALFAALISYVAKEILYRYSIKQGKKWNSKAIIAIAYDHKGDIVASLAAFIGVLLAIIGNSRGWSYLLYADAIASAIVAYLIFKISMELIRPSVDVLMEKSVDPELIEEYKAVIFQCDQVKRIDRIRAREHGHYKLLDVRLSLDHDLTIKQGHDIAREIRNEIKRQFSDVEEVLIHVNPYFEE.

Transmembrane regions (helical) follow at residues 12–32 (VALI…FFGL), 43–63 (GIHS…IGIS), 85–105 (IVGI…ILSF), 111–131 (VPQY…EILY), 155–175 (GDIV…IGNS), and 177–197 (GWSY…YLIF).

Belongs to the cation diffusion facilitator (CDF) transporter (TC 2.A.4) family.

The protein resides in the cell membrane. Functionally, primary efflux pump for manganese. May prevent manganese intoxication. In Bacillus subtilis (strain 168), this protein is Manganese efflux system protein MneP.